A 359-amino-acid polypeptide reads, in one-letter code: DNA polymerase IV (359 aa).

The UmuC domain occupies 4 to 184 (IVHVDMDAFY…LKVNRIPGVG (181 aa)). Residues aspartate 8 and aspartate 102 each contribute to the Mg(2+) site. Glutamate 103 is a catalytic residue.

This sequence belongs to the DNA polymerase type-Y family. As to quaternary structure, monomer. The cofactor is Mg(2+).

The protein resides in the cytoplasm. The catalysed reaction is DNA(n) + a 2'-deoxyribonucleoside 5'-triphosphate = DNA(n+1) + diphosphate. In terms of biological role, poorly processive, error-prone DNA polymerase involved in untargeted mutagenesis. Copies undamaged DNA at stalled replication forks, which arise in vivo from mismatched or misaligned primer ends. These misaligned primers can be extended by PolIV. Exhibits no 3'-5' exonuclease (proofreading) activity. May be involved in translesional synthesis, in conjunction with the beta clamp from PolIII. The polypeptide is DNA polymerase IV (Xanthomonas axonopodis pv. citri (strain 306)).